The sequence spans 137 residues: GEL complex subunit OPTI (137 aa).

At 1 to 44 (MSGGRRKEEPPQPQLANGALKVSVWSKVLRSDAAWEDKDEFLDV) the chain is on the cytoplasmic side. Residues 45–65 (IYWFRQIIAVVLGVIWGVLPL) traverse the membrane as a helical segment. Position 66 (arginine 66) is a topological domain, lumenal. A helical membrane pass occupies residues 67 to 84 (GFLGIAGFCLINAGVLYL). The Cytoplasmic portion of the chain corresponds to 85–103 (YFSNYLQIDEEEYGGTWEL). A helical transmembrane segment spans residues 104-127 (TKEGFMTSFALFMVCVADSFTTGH). Residues 128 to 137 (LDHLLHCHPL) are Lumenal-facing.

Belongs to the EMC6 family. As to quaternary structure, component of the GET- and EMC-like (GEL) complex, composed of RAB5IF/OPTI and TMCO1. The GEL complex is part of the multi-pass translocon (MPT) complex, composed of three subcomplexes, the GEL complex (composed of RAB5IF/OPTI and TMCO1), the BOS complex (composed of NCLN/Nicalin, NOMO and TMEM147) and the PAT complex (composed of WDR83OS/Asterix and CCDC47). The MPT complex associates with the SEC61 complex. Interacts with NDUFS3, NDUFA4, NDUFV1, NDUFA9 and NDUFS8 of the mitochondrial membrane respiratory chain NADH dehydrogenase (Complex I). Interacts with UQCRC2 of the ubiquinol-cytochrome c reductase complex (Complex III). Interacts with COX5A and COX7C of the cytochrome c oxidase complex (Complex IV). As to expression, expressed in embryonic stem cells and differentiated neuronal cells.

The protein resides in the endoplasmic reticulum membrane. It is found in the mitochondrion inner membrane. In terms of biological role, component of the multi-pass translocon (MPT) complex that mediates insertion of multi-pass membrane proteins into the lipid bilayer of membranes. The MPT complex takes over after the SEC61 complex: following membrane insertion of the first few transmembrane segments of proteins by the SEC61 complex, the MPT complex occludes the lateral gate of the SEC61 complex to promote insertion of subsequent transmembrane regions. Within the MPT complex, the GEL subcomplex may mediate insertion of transmembrane regions into the membrane. In addition to its role in multi-pass membrane insertion, RAB5IF/OPTI also acts as an assembly factor for mitochondrial respiratory complexes. This is GEL complex subunit OPTI from Homo sapiens (Human).